Reading from the N-terminus, the 107-residue chain is Small ribosomal subunit protein eS25 (107 aa).

A disordered region spans residues 1–35 (MPPKQQLSKAAKAAAAMAGGKKSKKKWSKKSHKDK). A compositionally biased stretch (low complexity) spans 8–20 (SKAAKAAAAMAGG). A compositionally biased stretch (basic residues) spans 21–35 (KKSKKKWSKKSHKDK).

The protein belongs to the eukaryotic ribosomal protein eS25 family.

The chain is Small ribosomal subunit protein eS25 (RPS25) from Candida glabrata (strain ATCC 2001 / BCRC 20586 / JCM 3761 / NBRC 0622 / NRRL Y-65 / CBS 138) (Yeast).